Reading from the N-terminus, the 458-residue chain is F-box/WD repeat-containing protein 9 (458 aa).

The residue at position 1 (methionine 1) is an N-acetylmethionine. 2 disordered regions span residues 1 to 30 and 42 to 64; these read MELPLGRCDDSRTWDDDSDPESETDPDAQA and KSGLAFSRPSQLSTPAASPSASE. The segment covering 16–26 has biased composition (acidic residues); the sequence is DDSDPESETDP. Serine 18 is subject to Phosphoserine. At threonine 55 the chain carries Phosphothreonine. Serine 59 bears the Phosphoserine mark. The 48-residue stretch at 76-123 folds into the F-box domain; that stretch reads EPGLLSLPPELLLEICSYLDARLVLHVLSRVCHALRDLVSDHVTWRLR. 7 WD repeats span residues 171-210, 220-261, 264-301, 305-342, 344-381, 387-424, and 427-458; these read GHVASVDSVLLLQGGSLCLSGSRDRNVNLWDLRQLGTESN, KRNS…QQFG, KASSAVLCLSYLPDILVTGTYDKKVTIYDPRAGPALLK, LHSRPVLTLLADDRHIISGSEDHTLVVVDRRANSVLQR, QLDSYLLCMSYQEPQLWAGDNQGLLHVFANRNGCFQLI, GHSFPITGIQYSVGALYTTSTDKTIRVHVPTDPPRTIC, and RHDNGLNRVCAEGNLVVAGSGDLSLEVWRLQA.

In terms of assembly, interacts with SKP1 and CUL1.

Functionally, substrate-recognition component of the SCF (SKP1-CUL1-F-box protein)-type E3 ubiquitin ligase complex. The polypeptide is F-box/WD repeat-containing protein 9 (FBXW9) (Homo sapiens (Human)).